A 790-amino-acid chain; its full sequence is Tumor necrosis factor alpha-induced protein 3 (790 aa).

N-acetylalanine is present on Ala-2. A TRAF-binding region spans residues 58–300 (PQFREIIHKA…LTDPENEMKE (243 aa)). In terms of domain architecture, OTU spans 92–263 (LVALKTNGDG…SHHFVPLVTL (172 aa)). Asp-100 is an active-site residue. Catalysis depends on Cys-103, which acts as the Nucleophile. Interaction with ubiquitin stretches follow at residues 157 to 159 (LCY), 190 to 192 (SLE), and 224 to 227 (FAPL). Residue His-256 is the Proton acceptor of the active site. Residues 357–368 (QENSEQGRREGH) show a composition bias toward basic and acidic residues. The tract at residues 357–377 (QENSEQGRREGHAQNPMEPSV) is disordered. Positions 369 to 775 (AQNPMEPSVP…ACDHFGNAKC (407 aa)) are interaction with TNIP1. An A20-type 1 zinc finger spans residues 381 to 416 (SLMDVKCETPNCPFFMSVNTQPLCHECSERRQKNQN). The interaction with RIPK1 stretch occupies residues 386–453 (KCETPNCPFF…EPLAWNPEES (68 aa)). Zn(2+) contacts are provided by Cys-387, Cys-392, Cys-404, and Cys-407. Disordered regions lie at residues 415-434 (QNKL…PGMA) and 447-468 (AWNP…PSPF). Position 459 is a phosphoserine (Ser-459). A20-type zinc fingers lie at residues 472–507 (ETTA…LHAS) and 515–548 (HLDP…AEAS). Zn(2+)-binding residues include Cys-478, Cys-483, Cys-495, Cys-498, Cys-521, Cys-524, Cys-536, and Cys-539. The disordered stretch occupies residues 550 to 583 (SLSTSLPPSCHQRSKSDPSRLVRSPSPHSCHRAG). The residue at position 575 (Ser-575) is a Phosphoserine. An A20-type 4 zinc finger spans residues 601 to 636 (RTGTSKCRKAGCVYFGTPENKGFCTLCFIEYRENKH). The segment at 605–655 (SKCRKAGCVYFGTPENKGFCTLCFIEYRENKHFAAASGKVSPTASRFQNTI) is required for proteasomal degradation of UBE2N and UBE2D3, TRAF6 deubiquitination, and TAX1BP1 interaction with UBE2N. The segment at 606–790 (KCRKAGCVYF…ECFQFKQMYG (185 aa)) is sufficient for inhibitory activity of TNF-induced NF-kappa-B activity. The Zn(2+) site is built by Cys-607, Cys-612, Cys-624, and Cys-627. At Ser-645 the chain carries Phosphoserine. The A20-type 5 zinc-finger motif lies at 651–686 (FQNTIPCLGRECGTLGSTMFEGYCQKCFIEAQNQRF). The Zn(2+) site is built by Cys-657, Cys-662, Cys-674, and Cys-677. Residues 689 to 705 (AKRTEEQLRSSQRRDVP) show a composition bias toward basic and acidic residues. Residues 689–712 (AKRTEEQLRSSQRRDVPRTTQSTS) are disordered. The segment at 697 to 790 (RSSQRRDVPR…ECFQFKQMYG (94 aa)) is required for lysosomal localization and for TRAF2 lysosomal degradation. 2 A20-type zinc fingers span residues 710 to 745 (STSR…RMGP) and 756 to 790 (DPPK…QMYG). Zn(2+) contacts are provided by Cys-716, Cys-721, Cys-733, Cys-736, Cys-762, Cys-767, Cys-779, and Cys-782.

The protein belongs to the peptidase C64 family. As to quaternary structure, homodimer. Interacts with TNIP1, TAX1BP1 and TRAF2. Interacts with RNF11, ITCH and TAX1BP1 only after TNF stimulation; these interaction are transient and they are lost after 1 hour of stimulation with TNF. Interacts with YWHAZ and YWHAH. Interacts with IKBKG; the interaction is induced by TNF stimulation and by polyubiquitin. Interacts with RIPK1. Interacts with UBE2N; the interaction requires TAX1BP1. Interacts with TRAF6; the interaction is inhibited by HTLV-1 protein Tax. Proteolytically cleaved by MALT1 upon TCR stimulation; disrupts NF-kappa-B inhibitory function and results in increased IL-2 production. It is proposed that only a fraction of TNFAIP3 colocalized with TCR and CBM complex is cleaved, leaving the main TNFAIP3 pool intact.

Its subcellular location is the cytoplasm. The protein localises to the nucleus. It localises to the lysosome. It carries out the reaction Thiol-dependent hydrolysis of ester, thioester, amide, peptide and isopeptide bonds formed by the C-terminal Gly of ubiquitin (a 76-residue protein attached to proteins as an intracellular targeting signal).. Functionally, ubiquitin-editing enzyme that contains both ubiquitin ligase and deubiquitinase activities. Involved in immune and inflammatory responses signaled by cytokines, such as TNF-alpha and IL-1 beta, or pathogens via Toll-like receptors (TLRs) through terminating NF-kappa-B activity. Essential component of a ubiquitin-editing protein complex, comprising also RNF11, ITCH and TAX1BP1, that ensures the transient nature of inflammatory signaling pathways. In cooperation with TAX1BP1 promotes disassembly of E2-E3 ubiquitin protein ligase complexes in IL-1R and TNFR-1 pathways; affected are at least E3 ligases TRAF6, TRAF2 and BIRC2, and E2 ubiquitin-conjugating enzymes UBE2N and UBE2D3. In cooperation with TAX1BP1 promotes ubiquitination of UBE2N and proteasomal degradation of UBE2N and UBE2D3. Upon TNF stimulation, deubiquitinates 'Lys-63'-polyubiquitin chains on RIPK1 and catalyzes the formation of 'Lys-48'-polyubiquitin chains. This leads to RIPK1 proteasomal degradation and consequently termination of the TNF- or LPS-mediated activation of NF-kappa-B. Deubiquitinates TRAF6 probably acting on 'Lys-63'-linked polyubiquitin. Upon T-cell receptor (TCR)-mediated T-cell activation, deubiquitinates 'Lys-63'-polyubiquitin chains on MALT1 thereby mediating disassociation of the CBM (CARD11:BCL10:MALT1) and IKK complexes and preventing sustained IKK activation. Deubiquitinates NEMO/IKBKG; the function is facilitated by TNIP1 and leads to inhibition of NF-kappa-B activation. Upon stimulation by bacterial peptidoglycans, probably deubiquitinates RIPK2. Can also inhibit I-kappa-B-kinase (IKK) through a non-catalytic mechanism which involves polyubiquitin; polyubiquitin promotes association with IKBKG and prevents IKK MAP3K7-mediated phosphorylation. Targets TRAF2 for lysosomal degradation. In vitro able to deubiquitinate 'Lys-11'-, 'Lys-48'- and 'Lys-63' polyubiquitin chains. Inhibitor of programmed cell death. Has a role in the function of the lymphoid system. Required for LPS-induced production of pro-inflammatory cytokines and IFN beta in LPS-tolerized macrophages. The chain is Tumor necrosis factor alpha-induced protein 3 (TNFAIP3) from Homo sapiens (Human).